A 251-amino-acid polypeptide reads, in one-letter code: 4-hydroxy-tetrahydrodipicolinate reductase (251 aa).

NAD(+)-binding positions include 9-14 (GCNGKM), 85-87 (ATT), and 109-112 (SANM). The active-site Proton donor/acceptor is the histidine 141. Residue histidine 142 coordinates (S)-2,3,4,5-tetrahydrodipicolinate. Residue lysine 145 is the Proton donor of the active site. Residue 151 to 152 (GT) participates in (S)-2,3,4,5-tetrahydrodipicolinate binding.

This sequence belongs to the DapB family.

Its subcellular location is the cytoplasm. The enzyme catalyses (S)-2,3,4,5-tetrahydrodipicolinate + NAD(+) + H2O = (2S,4S)-4-hydroxy-2,3,4,5-tetrahydrodipicolinate + NADH + H(+). It catalyses the reaction (S)-2,3,4,5-tetrahydrodipicolinate + NADP(+) + H2O = (2S,4S)-4-hydroxy-2,3,4,5-tetrahydrodipicolinate + NADPH + H(+). The protein operates within amino-acid biosynthesis; L-lysine biosynthesis via DAP pathway; (S)-tetrahydrodipicolinate from L-aspartate: step 4/4. In terms of biological role, catalyzes the conversion of 4-hydroxy-tetrahydrodipicolinate (HTPA) to tetrahydrodipicolinate. This is 4-hydroxy-tetrahydrodipicolinate reductase from Caldanaerobacter subterraneus subsp. tengcongensis (strain DSM 15242 / JCM 11007 / NBRC 100824 / MB4) (Thermoanaerobacter tengcongensis).